A 165-amino-acid polypeptide reads, in one-letter code: Protein SprT (165 aa).

Residues 22–163 (LAQANLKLGC…RCVHCGEQLV (142 aa)) form the SprT-like domain. H78 provides a ligand contact to Zn(2+). E79 is a catalytic residue. H82 lines the Zn(2+) pocket.

The protein belongs to the SprT family. The cofactor is Zn(2+).

Its subcellular location is the cytoplasm. This Shigella dysenteriae serotype 1 (strain Sd197) protein is Protein SprT.